The chain runs to 455 residues: UDP-glycosyltransferase 2 (455 aa).

Belongs to the UDP-glycosyltransferase family.

It carries out the reaction exophillate + UDP-alpha-D-galactose = phaeomoniecin D + UDP + H(+). Its pathway is secondary metabolite biosynthesis. In terms of biological role, catalyzes the second glycosylation step during phaeomoniecin D biosynthesis, the further O-galactosylation of exophillic acid (produced by the O-glycosyltransferase OGT1) to yield the 4-O-beta-D-galactoside phaeomoniecin D. In Phaeomoniella chlamydospora (Phaeoacremonium chlamydosporum), this protein is UDP-glycosyltransferase 2.